A 348-amino-acid chain; its full sequence is L-threonine 3-dehydrogenase (348 aa).

C42 serves as a coordination point for Zn(2+). Catalysis depends on charge relay system residues T44 and H47. 6 residues coordinate Zn(2+): H67, E68, C97, C100, C103, and C111. NAD(+)-binding positions include L179, E199, R204, 266–268 (LGL), and 291–292 (IT).

This sequence belongs to the zinc-containing alcohol dehydrogenase family. As to quaternary structure, homotetramer. Requires Zn(2+) as cofactor.

The protein localises to the cytoplasm. The catalysed reaction is L-threonine + NAD(+) = (2S)-2-amino-3-oxobutanoate + NADH + H(+). It functions in the pathway amino-acid degradation; L-threonine degradation via oxydo-reductase pathway; glycine from L-threonine: step 1/2. In terms of biological role, catalyzes the NAD(+)-dependent oxidation of L-threonine to 2-amino-3-ketobutyrate. In Pyrococcus abyssi (strain GE5 / Orsay), this protein is L-threonine 3-dehydrogenase.